The sequence spans 645 residues: Synaptotagmin-16 (645 aa).

Disordered regions lie at residues Ala-102–Ser-121, Glu-144–Glu-192, and Gln-206–Val-344. Positions Glu-167–Ser-177 are enriched in polar residues. Positions Gly-179–Glu-192 are enriched in acidic residues. The span at His-287–Gly-303 shows a compositional bias: polar residues. The C2 1 domain occupies Lys-350–Leu-469. The segment at Ser-478–His-503 is disordered. Positions Ser-485–Ser-502 are enriched in low complexity. Positions Gly-505 to His-640 constitute a C2 2 domain.

It belongs to the synaptotagmin family. As to quaternary structure, homodimer. Can also form heterodimers. Expressed in brain.

In terms of biological role, may be involved in the trafficking and exocytosis of secretory vesicles in non-neuronal tissues. Is Ca(2+)-independent. The sequence is that of Synaptotagmin-16 (SYT16) from Homo sapiens (Human).